The primary structure comprises 131 residues: Ribonuclease VapC4 (131 aa).

The PINc domain maps to 4–106; it reads IVPDTNFLIY…IVATNDKELK (103 aa). 2 residues coordinate Mg(2+): aspartate 7 and aspartate 102.

It belongs to the PINc/VapC protein family. The cofactor is Mg(2+).

In terms of biological role, toxic component of a type II toxin-antitoxin (TA) system. An RNase. Its cognate antitoxin is VapB4. In Methanocaldococcus jannaschii (strain ATCC 43067 / DSM 2661 / JAL-1 / JCM 10045 / NBRC 100440) (Methanococcus jannaschii), this protein is Ribonuclease VapC4.